A 380-amino-acid chain; its full sequence is uncharacterized protein (380 aa).

9 consecutive transmembrane segments (helical) span residues 15–35, 45–65, 75–95, 98–118, 123–143, 182–202, 217–237, 303–323, and 341–361; these read LFHPVSIVIIGHLMIFILAFP, LFKILGVLSIFIVGFFLPFIF, ILYLSFLLLSFLSIFGAFKIT, LFLSIAYLLFILIIAELFVKF, IFVDILFSIGIIAFLLIVLIY, IIAFMILVLLGYKAGVLMLFI, MVLLAFALLIFLGIMGKIILL, GTIYLDFGIFGGLFAMLLGVI, and LLLAYCEIGINYGFLVVLSLL.

It localises to the cell membrane. This is an uncharacterized protein from Methanocaldococcus jannaschii (strain ATCC 43067 / DSM 2661 / JAL-1 / JCM 10045 / NBRC 100440) (Methanococcus jannaschii).